The sequence spans 337 residues: RNA 3'-terminal phosphate cyclase (337 aa).

ATP-binding positions include Gln100 and 281 to 285 (YMGDQ). His306 (tele-AMP-histidine intermediate) is an active-site residue.

Belongs to the RNA 3'-terminal cyclase family. Type 1 subfamily.

The protein resides in the cytoplasm. It catalyses the reaction a 3'-end 3'-phospho-ribonucleotide-RNA + ATP = a 3'-end 2',3'-cyclophospho-ribonucleotide-RNA + AMP + diphosphate. Catalyzes the conversion of 3'-phosphate to a 2',3'-cyclic phosphodiester at the end of RNA. The mechanism of action of the enzyme occurs in 3 steps: (A) adenylation of the enzyme by ATP; (B) transfer of adenylate to an RNA-N3'P to produce RNA-N3'PP5'A; (C) and attack of the adjacent 2'-hydroxyl on the 3'-phosphorus in the diester linkage to produce the cyclic end product. The biological role of this enzyme is unknown but it is likely to function in some aspects of cellular RNA processing. The chain is RNA 3'-terminal phosphate cyclase (rtcA) from Methanothermobacter thermautotrophicus (strain ATCC 29096 / DSM 1053 / JCM 10044 / NBRC 100330 / Delta H) (Methanobacterium thermoautotrophicum).